The following is a 361-amino-acid chain: Peptide chain release factor 1 (361 aa).

Q235 bears the N5-methylglutamine mark. The segment at 284–306 (SQQATAEAMTRKLQVGSGDRSQR) is disordered.

Belongs to the prokaryotic/mitochondrial release factor family. Post-translationally, methylated by PrmC. Methylation increases the termination efficiency of RF1.

It localises to the cytoplasm. Its function is as follows. Peptide chain release factor 1 directs the termination of translation in response to the peptide chain termination codons UAG and UAA. The protein is Peptide chain release factor 1 of Xylella fastidiosa (strain 9a5c).